The following is a 238-amino-acid chain: Large ribosomal subunit protein uL1 (238 aa).

The segment at 217-238 (TNGPGVPVDETIQKNYADDAEA) is disordered.

Belongs to the universal ribosomal protein uL1 family. In terms of assembly, part of the 50S ribosomal subunit.

In terms of biological role, binds directly to 23S rRNA. The L1 stalk is quite mobile in the ribosome, and is involved in E site tRNA release. Protein L1 is also a translational repressor protein, it controls the translation of the L11 operon by binding to its mRNA. The protein is Large ribosomal subunit protein uL1 of Corynebacterium urealyticum (strain ATCC 43042 / DSM 7109).